A 255-amino-acid chain; its full sequence is TIR domain-containing protein (255 aa).

Residues 9–185 (LSDQVFINFR…DIVKEVKKQL (177 aa)) form the TIR domain. Glu83 is a catalytic residue. A run of 2 helical transmembrane segments spans residues 195–215 (AIGVAFLAITINLIFSFFIAP) and 223–243 (FFQTPEWFIGTLAVVLASWFW). The KASH domain occupies 201 to 255 (LAITINLIFSFFIAPKYLPDQKFFQTPEWFIGTLAVVLASWFWYKNNQNKAPPPS).

In terms of assembly, forms homomers. Interacts with SUN1, SUN2, SUN3, SUN4 and SUN5.

Its subcellular location is the nucleus membrane. The enzyme catalyses NAD(+) + H2O = ADP-D-ribose + nicotinamide + H(+). Could play a role in nuclear morphology, specifically nuclear size. The protein is TIR domain-containing protein of Arabidopsis thaliana (Mouse-ear cress).